The primary structure comprises 275 residues: Ribosomal RNA small subunit methyltransferase A (275 aa).

S-adenosyl-L-methionine contacts are provided by asparagine 19, leucine 21, glycine 46, glutamate 71, aspartate 94, and asparagine 117.

It belongs to the class I-like SAM-binding methyltransferase superfamily. rRNA adenine N(6)-methyltransferase family. RsmA subfamily.

Its subcellular location is the cytoplasm. The catalysed reaction is adenosine(1518)/adenosine(1519) in 16S rRNA + 4 S-adenosyl-L-methionine = N(6)-dimethyladenosine(1518)/N(6)-dimethyladenosine(1519) in 16S rRNA + 4 S-adenosyl-L-homocysteine + 4 H(+). Functionally, specifically dimethylates two adjacent adenosines (A1518 and A1519) in the loop of a conserved hairpin near the 3'-end of 16S rRNA in the 30S particle. May play a critical role in biogenesis of 30S subunits. The chain is Ribosomal RNA small subunit methyltransferase A from Burkholderia thailandensis (strain ATCC 700388 / DSM 13276 / CCUG 48851 / CIP 106301 / E264).